Reading from the N-terminus, the 95-residue chain is Aspartyl/glutamyl-tRNA(Asn/Gln) amidotransferase subunit C (95 aa).

Belongs to the GatC family. In terms of assembly, heterotrimer of A, B and C subunits.

It catalyses the reaction L-glutamyl-tRNA(Gln) + L-glutamine + ATP + H2O = L-glutaminyl-tRNA(Gln) + L-glutamate + ADP + phosphate + H(+). The enzyme catalyses L-aspartyl-tRNA(Asn) + L-glutamine + ATP + H2O = L-asparaginyl-tRNA(Asn) + L-glutamate + ADP + phosphate + 2 H(+). Allows the formation of correctly charged Asn-tRNA(Asn) or Gln-tRNA(Gln) through the transamidation of misacylated Asp-tRNA(Asn) or Glu-tRNA(Gln) in organisms which lack either or both of asparaginyl-tRNA or glutaminyl-tRNA synthetases. The reaction takes place in the presence of glutamine and ATP through an activated phospho-Asp-tRNA(Asn) or phospho-Glu-tRNA(Gln). This chain is Aspartyl/glutamyl-tRNA(Asn/Gln) amidotransferase subunit C, found in Acetivibrio thermocellus (strain ATCC 27405 / DSM 1237 / JCM 9322 / NBRC 103400 / NCIMB 10682 / NRRL B-4536 / VPI 7372) (Clostridium thermocellum).